The chain runs to 369 residues: Molybdenum import ATP-binding protein ModC (369 aa).

The region spanning 4-239 (LQLRAVVADR…PRSRFGARIA (236 aa)) is the ABC transporter domain. 31-38 (GPNGAGKS) lines the ATP pocket. In terms of domain architecture, Mop spans 293–361 (HGSPRNIVGL…VKAQEVALHP (69 aa)).

The protein belongs to the ABC transporter superfamily. Molybdate importer (TC 3.A.1.8) family. In terms of assembly, the complex is composed of two ATP-binding proteins (ModC), two transmembrane proteins (ModB) and a solute-binding protein (ModA).

Its subcellular location is the cell membrane. It catalyses the reaction molybdate(out) + ATP + H2O = molybdate(in) + ADP + phosphate + H(+). Its function is as follows. Part of the ABC transporter complex ModABC involved in molybdenum import. Responsible for energy coupling to the transport system. This Mycobacterium tuberculosis (strain CDC 1551 / Oshkosh) protein is Molybdenum import ATP-binding protein ModC.